A 129-amino-acid chain; its full sequence is Small ribosomal subunit protein uS11 (129 aa).

The protein belongs to the universal ribosomal protein uS11 family. Part of the 30S ribosomal subunit. Interacts with proteins S7 and S18. Binds to IF-3.

Located on the platform of the 30S subunit, it bridges several disparate RNA helices of the 16S rRNA. Forms part of the Shine-Dalgarno cleft in the 70S ribosome. The polypeptide is Small ribosomal subunit protein uS11 (Parvibaculum lavamentivorans (strain DS-1 / DSM 13023 / NCIMB 13966)).